The sequence spans 242 residues: MPSPKYKRVVLKLSGEALAGEKGYGIDPEVVNSIAGQIAEIIKEFGIQVAVVVGGGNIWRGLSGSAKGMDRATADYMGMLATVINSLALQDALEKLGIDTRVQTAIEMRQIAEPYIRRRAIRHLEKGRVVIFAAGTGNPYFSTDTTAALRAAEIEAEVILMAKRVDGVYDSDPLKNPNAQKFDELEYIEVLNRGLGVMDSTATSLCMDNNIPLIVFNLEVPGNIKRVILGENIGTIVGGERK.

An ATP-binding site is contributed by 12-15 (KLSG). Residues 20–25 (GEKGYG) form an involved in allosteric activation by GTP region. Gly-55 provides a ligand contact to UMP. ATP-binding residues include Gly-56 and Arg-60. UMP contacts are provided by residues Asp-75 and 136-143 (TGNPYFST). 2 residues coordinate ATP: Tyr-169 and Asp-172.

Belongs to the UMP kinase family. As to quaternary structure, homohexamer.

It is found in the cytoplasm. It carries out the reaction UMP + ATP = UDP + ADP. It participates in pyrimidine metabolism; CTP biosynthesis via de novo pathway; UDP from UMP (UMPK route): step 1/1. Allosterically activated by GTP. Inhibited by UTP. Functionally, catalyzes the reversible phosphorylation of UMP to UDP. This chain is Uridylate kinase, found in Carboxydothermus hydrogenoformans (strain ATCC BAA-161 / DSM 6008 / Z-2901).